We begin with the raw amino-acid sequence, 2108 residues long: Mucin-5B (2108 aa).

The signal sequence occupies residues Met1–Gly21. The VWFD 1 domain occupies Ser36–Pro203. Disulfide bonds link Cys38–Cys166 and Cys60–Cys202. Positions Glu196–Asp219 are disordered. The 57-residue stretch at Cys304–Cys360 folds into the TIL 1 domain. The N-linked (GlcNAc...) (complex) asparagine glycan is linked to Asn381. The region spanning Gly398–Phe570 is the VWFD 2 domain. Disulfide bonds link Cys400–Cys534, Cys422–Cys569, and Cys443–Cys451. 4 N-linked (GlcNAc...) (complex) asparagine glycosylation sites follow: Asn528, Asn599, Asn680, and Asn772. Residues Cys666–Cys723 enclose the TIL 2 domain. One can recognise a TIL 3 domain in the interval Gly782–Cys825. The 73-residue stretch at Cys825–Pro897 folds into the VWFC 1 domain. Asn855 is a glycosylation site (N-linked (GlcNAc...) (complex) asparagine). The VWFD 3 domain maps to Gly863–Ser1033. Intrachain disulfides connect Cys865-Cys997, Cys887-Cys1032, Cys896-Cys994, and Cys914-Cys921. Asn1036, Asn1219, Asn1371, and Asn1452 each carry an N-linked (GlcNAc...) (complex) asparagine glycan. In terms of domain architecture, VWFD 4 spans Cys1429 to Asn1613. Cystine bridges form between Cys1431–Cys1573, Cys1453–Cys1612, and Cys1477–Cys1485. Residues Asn1567, Asn1639, Asn1792, Asn1807, and Asn1841 are each glycosylated (N-linked (GlcNAc...) (complex) asparagine). Positions Cys1761–Glu1832 constitute a VWFC 2 domain. The VWFC 3 domain maps to Gly1870 to Gln1937. A glycan (N-linked (GlcNAc...) (complex) asparagine) is linked at Asn1964. 4 cysteine pairs are disulfide-bonded: Cys2010/Cys2066, Cys2031/Cys2080, Cys2042/Cys2096, and Cys2046/Cys2098. In terms of domain architecture, CTCK spans Cys2010–Pro2104.

Homomultimer; disulfide-linked. The N- and C-terminus mediate their assembly into higher order structures to form filaments. The CTCK domains of two polypeptides associate in the endoplasmic reticulum to generate intermolecularly disulfide-bonded dimers. These dimers progress to the Golgi apparatus, which is a more acidic environment than the endoplasmic reticulum. Under acidic conditions, the N-termini form non-covalent intermolecular interactions that juxtapose assemblies from different CTCK-linked dimers to produce long, disulfide-linked polymers that remain highly compact until secretion. Post-translationally, N-glycosylated. Complex glycosylation with bisecting N-acetylglucosamine. Contains mainly N-acetylglucosamine (3.1-8.5%), mannose (2.9-4.6%), a small amount of galactose (1.1-4.35) and sialic acid (0.3-1.3%). Most abundant glycan is composed of a GlcNAc(2)Man(3) core, a bisecting GlcNAc and another 3 GlcNAc antannae located on the mannoses of the core. Site Asn-1639 exists both in glycosylated and non-glycosylated forms.

Its subcellular location is the secreted. Ovomucin, the glycoprotein responsible for the gel properties of egg white, is composed for 2 subunits, alpha-ovomucin/MUC5B and beta-ovomucin/MUC6. In Gallus gallus (Chicken), this protein is Mucin-5B (MUC5B).